A 197-amino-acid chain; its full sequence is 3-isopropylmalate dehydratase small subunit (197 aa).

It belongs to the LeuD family. LeuD type 1 subfamily. In terms of assembly, heterodimer of LeuC and LeuD.

It catalyses the reaction (2R,3S)-3-isopropylmalate = (2S)-2-isopropylmalate. Its pathway is amino-acid biosynthesis; L-leucine biosynthesis; L-leucine from 3-methyl-2-oxobutanoate: step 2/4. In terms of biological role, catalyzes the isomerization between 2-isopropylmalate and 3-isopropylmalate, via the formation of 2-isopropylmaleate. This chain is 3-isopropylmalate dehydratase small subunit (leuD), found in Streptomyces coelicolor (strain ATCC BAA-471 / A3(2) / M145).